A 255-amino-acid chain; its full sequence is Taurine import ATP-binding protein TauB (255 aa).

The region spanning 2 to 229 is the ABC transporter domain; that stretch reads LQISHLYADY…RFVAGESSRS (228 aa). 34–41 contributes to the ATP binding site; sequence GPSGCGKT.

It belongs to the ABC transporter superfamily. Taurine importer (TC 3.A.1.17.1) family. In terms of assembly, the complex is composed of two ATP-binding proteins (TauB), two transmembrane proteins (TauC) and a solute-binding protein (TauA).

It is found in the cell inner membrane. It catalyses the reaction taurine(out) + ATP + H2O = taurine(in) + ADP + phosphate + H(+). In terms of biological role, part of the ABC transporter complex TauABC involved in taurine import. Responsible for energy coupling to the transport system. In Shigella dysenteriae serotype 1 (strain Sd197), this protein is Taurine import ATP-binding protein TauB.